The primary structure comprises 373 residues: MSEKKINLLDLDRKGLRALFTEMGEKPFRADQLMKWIYHFGVSDFDEMNNINKALRAKLNARCEIVAPEISSFQKSEDGTIKFAINVGQGQEVETVYIPEDDRATLCVSSQVGCALECTFCSTAQQGFNRNLTVSEIIGQVWRVADFIGFVKETGERPITNVVMMGMGEPLLNLKNVIPAMDIMLDDFGFSLSKRRVTVSTSGVVPALDKLGDALDVALAVSIHAPNDELRDVLVPVNKKYPLEEFLGGIRRYIAKSNANRGRVTVEYVMLDHINDSTDQAHELAKLMKDTPCKINLIPFNPYPGSPYGRSSNSRIDRFSKVLMEYGLTVIVRKTRGDDIDAACGQLAGDIRDRTKRLAKKRMQDSQISVTIN.

Glu-94 (proton acceptor) is an active-site residue. One can recognise a Radical SAM core domain in the interval Glu-100–Asp-339. Cys-107 and Cys-344 are oxidised to a cystine. [4Fe-4S] cluster-binding residues include Cys-114, Cys-118, and Cys-121. S-adenosyl-L-methionine contacts are provided by residues Gly-168–Glu-169, Ser-200, Ser-222–His-224, and Asn-301. Cys-344 serves as the catalytic S-methylcysteine intermediate.

The protein belongs to the radical SAM superfamily. RlmN family. Requires [4Fe-4S] cluster as cofactor.

The protein localises to the cytoplasm. The enzyme catalyses adenosine(2503) in 23S rRNA + 2 reduced [2Fe-2S]-[ferredoxin] + 2 S-adenosyl-L-methionine = 2-methyladenosine(2503) in 23S rRNA + 5'-deoxyadenosine + L-methionine + 2 oxidized [2Fe-2S]-[ferredoxin] + S-adenosyl-L-homocysteine. It catalyses the reaction adenosine(37) in tRNA + 2 reduced [2Fe-2S]-[ferredoxin] + 2 S-adenosyl-L-methionine = 2-methyladenosine(37) in tRNA + 5'-deoxyadenosine + L-methionine + 2 oxidized [2Fe-2S]-[ferredoxin] + S-adenosyl-L-homocysteine. Its function is as follows. Specifically methylates position 2 of adenine 2503 in 23S rRNA and position 2 of adenine 37 in tRNAs. m2A2503 modification seems to play a crucial role in the proofreading step occurring at the peptidyl transferase center and thus would serve to optimize ribosomal fidelity. This chain is Dual-specificity RNA methyltransferase RlmN, found in Shewanella woodyi (strain ATCC 51908 / MS32).